Here is a 160-residue protein sequence, read N- to C-terminus: GPI-anchored protein LLG3 (160 aa).

Residues 1 to 23 form the signal peptide; it reads MKITHHCLVSLLSILLLSGFAFS. The N-linked (GlcNAc...) asparagine glycan is linked to Asn56. Ser137 carries the GPI-anchor amidated serine lipid modification. A propeptide spans 138 to 160 (removed in mature form); sequence HASIPLVSTHVLLITVSILFHLF.

As to expression, expressed in pollen, pollen tubes, sporophytic pistil tissues, in the early stages of female gametophyte development, and in unfertilized, mature ovules.

It localises to the cell membrane. This is GPI-anchored protein LLG3 from Arabidopsis thaliana (Mouse-ear cress).